The chain runs to 265 residues: Indole-3-glycerol phosphate synthase (265 aa).

This sequence belongs to the TrpC family.

The catalysed reaction is 1-(2-carboxyphenylamino)-1-deoxy-D-ribulose 5-phosphate + H(+) = (1S,2R)-1-C-(indol-3-yl)glycerol 3-phosphate + CO2 + H2O. It functions in the pathway amino-acid biosynthesis; L-tryptophan biosynthesis; L-tryptophan from chorismate: step 4/5. The polypeptide is Indole-3-glycerol phosphate synthase (Xanthomonas oryzae pv. oryzae (strain PXO99A)).